The following is a 3790-amino-acid chain: Transcription-associated protein 1 (3790 aa).

HEAT repeat units lie at residues Arg98 to Pro136, Thr335 to Gln381, Asp740 to Leu778, Ala1185 to Lys1223, Ile1332 to Leu1370, and Ala1826 to Leu1864. In terms of domain architecture, FAT spans Leu2610–Thr3173. The PI3K/PI4K catalytic domain maps to Met3429–Asn3753. Positions Val3435–Ala3441 are G-loop. A catalytic loop region spans residues Asn3616 to Met3624. The tract at residues Ile3636–Thr3661 is activation loop. The FATC domain occupies Phe3758–Leu3790.

This sequence belongs to the PI3/PI4-kinase family. TRA1 subfamily. As to quaternary structure, component of the Tip60 chromatin-remodeling complex which contains the catalytic subunit Tip60 and the subunits Domino, Tra1, Brd8, E(Pc), DMAP1, Pontin, Reptin, Ing3, Act87E, BAP55, Mrg15, MrgBP, Gas41 and YL-1. Probable component of some SAGA complex. Interacts with Spt3, Gcn5, Ada3 and Ada2b. As to expression, ubiquitous.

It localises to the nucleus. The protein resides in the cytoplasm. The protein localises to the chromosome. Its function is as follows. Part of the Tip60 chromatin-remodeling complex which is involved in DNA repair. Upon induction of DNA double-strand breaks, this complex acetylates phosphorylated H2AV in nucleosomes and exchanges it with unmodified H2AV. During wing development, required for activity of Notch and its coactivator mam. Function in promoting mam function is likely to involve both the Tip60 and SAGA complexes. This is Transcription-associated protein 1 (Nipped-A) from Drosophila melanogaster (Fruit fly).